We begin with the raw amino-acid sequence, 360 residues long: Peptide chain release factor 1 (360 aa).

The residue at position 234 (Q234) is an N5-methylglutamine.

It belongs to the prokaryotic/mitochondrial release factor family. Post-translationally, methylated by PrmC. Methylation increases the termination efficiency of RF1.

The protein localises to the cytoplasm. Its function is as follows. Peptide chain release factor 1 directs the termination of translation in response to the peptide chain termination codons UAG and UAA. The sequence is that of Peptide chain release factor 1 from Clostridium botulinum (strain Eklund 17B / Type B).